Consider the following 131-residue polypeptide: Large-conductance mechanosensitive channel (131 aa).

3 consecutive transmembrane segments (helical) span residues 8–28 (FALKGNVLDLAVGVIIGGAFG), 30–50 (IVTSLVNDIIMPILGLVVGGI), and 72–92 (GQFIQTTFDFLIIAFSIFMFI).

The protein belongs to the MscL family. In terms of assembly, homopentamer.

The protein resides in the cell membrane. Functionally, channel that opens in response to stretch forces in the membrane lipid bilayer. May participate in the regulation of osmotic pressure changes within the cell. This is Large-conductance mechanosensitive channel from Alkaliphilus oremlandii (strain OhILAs) (Clostridium oremlandii (strain OhILAs)).